A 106-amino-acid chain; its full sequence is uORF protein (106 aa).

The span at 1–19 (MDLETRVSGHEKPQRRNPE) shows a compositional bias: basic and acidic residues. The segment at 1–31 (MDLETRVSGHEKPQRRNPEDPDCQYAKTRSS) is disordered.

Its subcellular location is the host cytoplasm. It localises to the host cytoskeleton. In terms of biological role, plays a role in viral replication. The polypeptide is uORF protein (Zika virus (ZIKV)).